A 711-amino-acid chain; its full sequence is DNA topoisomerase 3 (711 aa).

The region spanning 2–135 (KSLILAEKPS…IKRLWISSVT (134 aa)) is the Toprim domain. Positions 8 and 104 each coordinate Mg(2+). Residues 152 to 580 (YQNLYEAALA…EMKNFTFKVV (429 aa)) enclose the Topo IA-type catalytic domain. The tract at residues 186–191 (SLGRVQ) is interaction with DNA. Tyrosine 305 (O-(5'-phospho-DNA)-tyrosine intermediate) is an active-site residue.

Belongs to the type IA topoisomerase family. Mg(2+) serves as cofactor.

It carries out the reaction ATP-independent breakage of single-stranded DNA, followed by passage and rejoining.. Releases the supercoiling and torsional tension of DNA, which is introduced during the DNA replication and transcription, by transiently cleaving and rejoining one strand of the DNA duplex. Introduces a single-strand break via transesterification at a target site in duplex DNA. The scissile phosphodiester is attacked by the catalytic tyrosine of the enzyme, resulting in the formation of a DNA-(5'-phosphotyrosyl)-enzyme intermediate and the expulsion of a 3'-OH DNA strand. The free DNA strand then undergoes passage around the unbroken strand, thus removing DNA supercoils. Finally, in the religation step, the DNA 3'-OH attacks the covalent intermediate to expel the active-site tyrosine and restore the DNA phosphodiester backbone. The chain is DNA topoisomerase 3 from Staphylococcus epidermidis (strain ATCC 12228 / FDA PCI 1200).